The primary structure comprises 215 residues: UPF0502 protein Shal_1801 (215 aa).

It belongs to the UPF0502 family.

The chain is UPF0502 protein Shal_1801 from Shewanella halifaxensis (strain HAW-EB4).